Reading from the N-terminus, the 464-residue chain is Asparagine--tRNA ligase (464 aa).

This sequence belongs to the class-II aminoacyl-tRNA synthetase family. As to quaternary structure, homodimer.

It is found in the cytoplasm. The enzyme catalyses tRNA(Asn) + L-asparagine + ATP = L-asparaginyl-tRNA(Asn) + AMP + diphosphate + H(+). The chain is Asparagine--tRNA ligase from Xanthomonas euvesicatoria pv. vesicatoria (strain 85-10) (Xanthomonas campestris pv. vesicatoria).